Here is a 332-residue protein sequence, read N- to C-terminus: Protein phosphatase PTC7 homolog fig (332 aa).

Positions 70-325 constitute a PPM-type phosphatase domain; sequence KPCSPRERAN…DDITLILASV (256 aa). Residues Asp102, Gly103, and Asp247 each contribute to the Mn(2+) site.

This sequence belongs to the PP2C family. Requires Mg(2+) as cofactor. The cofactor is Mn(2+).

The enzyme catalyses O-phospho-L-seryl-[protein] + H2O = L-seryl-[protein] + phosphate. The catalysed reaction is O-phospho-L-threonyl-[protein] + H2O = L-threonyl-[protein] + phosphate. The sequence is that of Protein phosphatase PTC7 homolog fig from Drosophila ananassae (Fruit fly).